The chain runs to 395 residues: ATP phosphoribosyltransferase regulatory subunit (395 aa).

It belongs to the class-II aminoacyl-tRNA synthetase family. HisZ subfamily. In terms of assembly, heteromultimer composed of HisG and HisZ subunits.

It localises to the cytoplasm. The protein operates within amino-acid biosynthesis; L-histidine biosynthesis; L-histidine from 5-phospho-alpha-D-ribose 1-diphosphate: step 1/9. Its function is as follows. Required for the first step of histidine biosynthesis. May allow the feedback regulation of ATP phosphoribosyltransferase activity by histidine. The polypeptide is ATP phosphoribosyltransferase regulatory subunit (Stutzerimonas stutzeri (Pseudomonas stutzeri)).